Consider the following 252-residue polypeptide: MTQHSRNTPQFYLTAPTPCPYLEGFQERKVFTHLVGDKAGELNDLLTHGGFRRSQSIAYRPACDLCRACVSVRVIAGEFEPSRNLRKVLHRNADLVGEMRNAVPTSEQYSIFRAYLDARHHDGGMADMTVLDYAMMVEDTHVTTRIVEYRRRTDSGKQGGELVAAALTDVLGDGLSMVYSFFDPDVDDRSLGTFMILDHIARARSMGLPYVYLGYWIEGSSKMSYKARFLPQQRLSPNGWLRVDATGIATQD.

Belongs to the R-transferase family. Bpt subfamily.

It is found in the cytoplasm. It catalyses the reaction N-terminal L-glutamyl-[protein] + L-leucyl-tRNA(Leu) = N-terminal L-leucyl-L-glutamyl-[protein] + tRNA(Leu) + H(+). It carries out the reaction N-terminal L-aspartyl-[protein] + L-leucyl-tRNA(Leu) = N-terminal L-leucyl-L-aspartyl-[protein] + tRNA(Leu) + H(+). Functions in the N-end rule pathway of protein degradation where it conjugates Leu from its aminoacyl-tRNA to the N-termini of proteins containing an N-terminal aspartate or glutamate. This is Aspartate/glutamate leucyltransferase from Afipia carboxidovorans (strain ATCC 49405 / DSM 1227 / KCTC 32145 / OM5) (Oligotropha carboxidovorans).